The primary structure comprises 488 residues: Tocopherol cyclase, chloroplastic (488 aa).

A chloroplast-targeting transit peptide spans 1–76 (MEIRSLIVSM…VPTSPNRELR (76 aa)).

Its subcellular location is the plastid. It localises to the chloroplast. The protein localises to the plastoglobule. The enzyme catalyses delta-tocopherol = 2-methyl-6-phytyl-1,4-benzene-1,4-diol. It carries out the reaction gamma-tocopherol = 2,3-dimethyl-6-phytylbenzene-1,4-diol. The catalysed reaction is delta-tocotrienol = 6-geranylgeranyl-2-methylbenzene-1,4-diol. It catalyses the reaction gamma-tocotrienol = 6-geranylgeranyl-2,3-dimethylbenzene-1,4-diol. The protein operates within cofactor biosynthesis; tocopherol biosynthesis. In terms of biological role, involved in the synthesis of both tocopherols and tocotrienols (vitamin E), which presumably protect photosynthetic complexes from oxidative stress. Catalyzes the conversion of 2-methyl-6-phytyl-1,4-hydroquinone and 2,3-dimethyl-5-phytyl-1,4-hydroquinone (DMPQ) to delta- and gamma-tocopherol respectively. Also converts 2,3-dimethyl-5-geranylgeranyl-1,4-hydroquinone (DMGQ) to gamma-tocotrienol. The polypeptide is Tocopherol cyclase, chloroplastic (VTE1) (Arabidopsis thaliana (Mouse-ear cress)).